Reading from the N-terminus, the 299-residue chain is Ig alpha chain C region (299 aa).

Ig-like domains lie at 71-167 (PSLS…ATIS) and 174-276 (PQVH…KTID).

Ig alpha is the major immunoglobulin class in body secretions. It may serve both to defend against local infection and to prevent access of foreign antigens to the general immunologic system. The protein is Ig alpha chain C region of Oryctolagus cuniculus (Rabbit).